Consider the following 135-residue polypeptide: Fatty acid-binding protein 5 (135 aa).

Ala2 bears the N-acetylalanine mark. Residue Ser3 is modified to Phosphoserine. The Nuclear localization signal signature appears at 24–34; sequence KELGVGLALRK. Residues Cys43 and Arg109 each contribute to the N-eicosanoyl ethanolamine site. A disulfide bond links Cys120 and Cys127. 129 to 131 contacts (9Z,12Z)-octadecadienoate; that stretch reads RVY. Position 131 (Tyr131) interacts with N-eicosanoyl ethanolamine. Tyr131 contacts hexadecanoate. Tyr131 carries the post-translational modification Phosphotyrosine.

Belongs to the calycin superfamily. Fatty-acid binding protein (FABP) family. In terms of assembly, monomer.

Its subcellular location is the cytoplasm. The protein resides in the nucleus. It is found in the synapse. The protein localises to the postsynaptic density. It localises to the secreted. The enzyme catalyses hexadecanoate(out) = hexadecanoate(in). It carries out the reaction (9Z,12Z)-octadecadienoate(out) = (9Z,12Z)-octadecadienoate(in). It catalyses the reaction (9Z)-octadecenoate(out) = (9Z)-octadecenoate(in). Intracellular carrier for long-chain fatty acids and related active lipids, such as endocannabinoids, that regulate the metabolism and actions of the ligands they bind. In addition to the cytosolic transport, selectively delivers specific fatty acids from the cytosol to the nucleus, wherein they activate nuclear receptors. Delivers retinoic acid to the nuclear receptor peroxisome proliferator-activated receptor delta; which promotes proliferation and survival. May also serve as a synaptic carrier of endocannabinoid at central synapses and thus controls retrograde endocannabinoid signaling. Modulates inflammation by regulating PTGES induction via NF-kappa-B activation, and prostaglandin E2 (PGE2) biosynthesis during inflammation. This chain is Fatty acid-binding protein 5, found in Rattus norvegicus (Rat).